A 509-amino-acid chain; its full sequence is Zinc finger protein CKR1 (509 aa).

Positions 1–61 constitute a KRAB domain; sequence MEPYVLLDPR…GSEEPQTHPP (61 aa). Basic and acidic residues-rich tracts occupy residues 41–50 and 98–112; these read EDAVGLKEDA and PKRDGVKPSRVRDRP. The disordered stretch occupies residues 41–114; that stretch reads EDAVGLKEDA…PSRVRDRPFG (74 aa). 11 consecutive C2H2-type zinc fingers follow at residues 113–135, 141–163, 169–191, 197–219, 225–247, 279–303, 303–325, 331–353, 359–383, 387–409, and 415–437; these read FGCPDCGKSFPWASHLERHRRVH, YSCPECGESYSQSSHLVQHRRTH, HKCQHCGKPFAGAAQLLAHSRGH, HRCGDCGKGFVWASHLERHRRVH, YECPECGEAFSQGSHLTKHRRSH, QRCAECGKAFRAAPPLRRHRRERSH, HRCGDCGKGFAWASHLQRHRRVH, FPCGLCGERFSQKAHLLQHGKTH, YKCGDCGKRFENAPPFLAHRRGHAA, and FTCGDCGKGFAWASHLQRHRRVH. Residues 428–479 form a disordered region; the sequence is SHLTKHRRSHGPKAPLLPVQGRGEAGEPLRASPLSSGAEQRDGRRAQRGGVE.

The protein belongs to the krueppel C2H2-type zinc-finger protein family.

It localises to the nucleus. In Gallus gallus (Chicken), this protein is Zinc finger protein CKR1.